We begin with the raw amino-acid sequence, 493 residues long: Chitinase 1 (493 aa).

The signal sequence occupies residues 1–20 (MISCNILGITIAAFITSTLA). One can recognise a GH18 domain in the interval 27–318 (VNVMYYWGQN…HGSSAALGQA (292 aa)). E164 functions as the Proton donor in the catalytic mechanism.

It belongs to the glycosyl hydrolase 18 family. Chitinase class III subfamily.

It carries out the reaction Random endo-hydrolysis of N-acetyl-beta-D-glucosaminide (1-&gt;4)-beta-linkages in chitin and chitodextrins.. This is Chitinase 1 (CHI1) from Rhizopus niveus.